Consider the following 311-residue polypeptide: Porphobilinogen deaminase (311 aa).

The residue at position 242 (C242) is an S-(dipyrrolylmethanemethyl)cysteine.

The protein belongs to the HMBS family. Monomer. It depends on dipyrromethane as a cofactor.

It carries out the reaction 4 porphobilinogen + H2O = hydroxymethylbilane + 4 NH4(+). Its pathway is porphyrin-containing compound metabolism; protoporphyrin-IX biosynthesis; coproporphyrinogen-III from 5-aminolevulinate: step 2/4. In terms of biological role, tetrapolymerization of the monopyrrole PBG into the hydroxymethylbilane pre-uroporphyrinogen in several discrete steps. This is Porphobilinogen deaminase (hemC) from Vibrio cholerae serotype O1 (strain ATCC 39315 / El Tor Inaba N16961).